The chain runs to 1325 residues: Lysine-specific demethylase 3A (1325 aa).

Disordered regions lie at residues 249–284 (SKRI…QGHV), 300–333 (PANK…RRSV), and 372–399 (QNGK…TGLK). The span at 274-283 (SPEVSQSQGH) shows a compositional bias: polar residues. Positions 378-390 (SLISSRSSSLSDS) are enriched in low complexity. The C6-type zinc finger occupies 669–694 (CDVCDTTIFNLRWVCSKCGFGVCVDC). 2 disordered regions span residues 772–791 (TLKE…SLQQ) and 798–819 (PQLP…TASV). The LXXLL motif signature appears at 888–892 (LRNLL). The JmjC domain occupies 1062–1285 (MPSRFDDLMK…HCFWLTQEFR (224 aa)). 3 residues coordinate Fe cation: His-1124, Asp-1126, and His-1253.

This sequence belongs to the JHDM2 histone demethylase family. Fe(2+) is required as a cofactor.

It localises to the cytoplasm. It is found in the nucleus. The catalysed reaction is N(6),N(6)-dimethyl-L-lysyl(9)-[histone H3] + 2 2-oxoglutarate + 2 O2 = L-lysyl(9)-[histone H3] + 2 formaldehyde + 2 succinate + 2 CO2. Histone demethylase that specifically demethylates 'Lys-9' of histone H3, thereby playing a central role in histone code. Preferentially demethylates mono- and dimethylated H3 'Lys-9' residue, with a preference for dimethylated residue, while it has weak or no activity on trimethylated H3 'Lys-9'. Demethylation of Lys residue generates formaldehyde and succinate. The protein is Lysine-specific demethylase 3A (KDM3A) of Gallus gallus (Chicken).